The primary structure comprises 294 residues: Flagellin B1 (294 aa).

Residues 1 to 8 constitute a propeptide that is removed on maturation; it reads MKTRTRKG.

Belongs to the archaeal flagellin family.

Its subcellular location is the archaeal flagellum. Its function is as follows. Flagellin is the subunit protein which polymerizes to form the filaments of archaeal flagella. This Thermococcus kodakarensis (strain ATCC BAA-918 / JCM 12380 / KOD1) (Pyrococcus kodakaraensis (strain KOD1)) protein is Flagellin B1 (flaB1).